The following is a 209-amino-acid chain: HTLV-1 basic zipper factor (209 aa).

A disordered region spans residues 41 to 165 (EEEETVLDGL…KEKMQELGVD (125 aa)). Composition is skewed to basic and acidic residues over residues 72-87 (PRGE…AEEK) and 94-160 (REKE…EKMQ). Short sequence motifs (nuclear localization signal) lie at residues 87-92 (KRKRKK), 116-120 (RRKRA), and 137-141 (RRERK).

The protein belongs to the HTLV-1 HBZ protein family. Interacts with host ATF4; this interaction inhibits viral RNA transcriptional activation by preventing ATF4 binding to Tax-responsive elements. Interacts with host CREB1; this interaction inhibits host CREB1 transcriptional activity. Interacts with host JUN, JUNB and JUND. Interacts with host EP300 and CREBBP; these interactions inhibit the association of the coactivators with the viral promoter. Interacts with host UBR5; this interaction regulates HBZ protein stability. Interacts with XRCC5 and XRCC6. Interacts with IRF7 and IKBKE; this interaction modulates host interferon signaling. In terms of processing, ubiquitinated by host E3 ligase UBR5 leading to HBZ degradation.

It localises to the host nucleus. Functionally, enhances viral infectivity and persistence, and facilitates proliferation of HTLV-1-infected lymphocytes. Mechanistically, inhibits Tax-mediated viral replication and NF-kappa-B activation. Plays a role in allowing infected T-cells to escape the cytotoxic T-lymphocyte response by maintaining low levels of viral protein production. Also inhibits host EP300 histone acetyltransferase (HAT) activity, reducing levels of acetylated histone H3 at 'Lys-18' (H3K18ac) in infected cells. Contributes to the accumulation of chromosomal abnormalities by inhibiting double-stranded DNA breaks (DSB) repair through the NHEJ pathway. Participates in the modulation of host immune response at multiple levels contributing to abnormal interferon signaling and viral pathogenesis. The chain is HTLV-1 basic zipper factor (HBZ) from Human T-cell leukemia virus 1 (isolate Caribbea HS-35 subtype A) (HTLV-1).